A 161-amino-acid chain; its full sequence is Decarboxylase (161 aa).

Residues 29 to 131 (QGMSEEAYRK…VGDHENFADT (103 aa)) enclose the EthD domain.

It belongs to the tpcK family.

The catalysed reaction is atrochrysone carboxylate + H(+) = atrochrysone + CO2. It functions in the pathway secondary metabolite biosynthesis. Decarboxylase; part of the gene cluster that mediates the biosynthesis of monodictyphenone, a prenyl xanthone derivative. The pathway begins with the synthesis of atrochrysone thioester by the polyketide synthase (PKS) mdpG. The atrochrysone carboxyl ACP thioesterase mdpF then breaks the thioester bond and releases the atrochrysone carboxylic acid from mdpG. The atrochrysone carboxylic acid is then converted to atrochrysone which is further transformed into emodin anthrone by mdpH-1 and mdpH-2. Emodin is further modified to yield monodictyphenone via several steps involving mdpB, mdpC mdpJ, mdpK and mdpL. These enzymes with xptA, xptB and xptC are also proposed to be involved in the synthesis of shamixanthone from emodin. Especially, direct reduction of emodin by the short chain dehydrogenase mdpC followed by dehydration catalyzed by the scytalone dehydratase-like protein mdpB gives loss of oxygen and formation of chrysophanol intermediate in two simple steps. The sequence is that of Decarboxylase from Emericella nidulans (strain FGSC A4 / ATCC 38163 / CBS 112.46 / NRRL 194 / M139) (Aspergillus nidulans).